The sequence spans 121 residues: Apoptin (121 aa).

2 disordered regions span residues 1–28 (MNAL…LETP) and 57–121 (LRSA…CIRL). The span at 58–70 (RSATADNSESTGF) shows a compositional bias: polar residues. Positions 88 to 102 (RSCDPSEYRVSELKE) are enriched in basic and acidic residues.

Belongs to the gyrovirus apoptin family.

Its subcellular location is the host nucleus. In terms of biological role, may act as transcriptional regulator. Induces apoptosis in infected cells. Element of infectious replication cycle. The sequence is that of Apoptin (VP3) from Gallus gallus (Chicken).